Consider the following 121-residue polypeptide: MKWWKLSGQILLLFCFAWTGEWIAKQAHLPVPGSIIGIFLLLISLKFNLVKKEWIQDGADFLLKELILFFIPSAVAVIRYRDTLTQYGIDLILIIMISTLCVTLVTGLLTELLLKRKGSTQ.

The next 4 helical transmembrane spans lie at 7 to 24 (SGQI…EWIA), 28 to 50 (HLPV…FNLV), 62 to 81 (LLKE…IRYR), and 91 to 113 (LILI…TELL).

It belongs to the CidA/LrgA family. CidA subfamily.

The protein resides in the cell membrane. In terms of biological role, increases the activity of extracellular murein hydrolases possibly by mediating their export via hole formation. Inhibited by the antiholin-like proteins LrgAB. In an unstressed cell, the LrgAB products probably inhibit the function of the CidA protein. When a cell is stressed by the addition of antibiotics or by other factors in the environment, CidA possibly oligomerizes within the bacterial cell membrane, creating lesions that disrupt the proton motive force, which in turn results in loss of cell viability. These lesions are also hypothesized to regulate the subsequent cell lysis by either allowing the murein hydrolases access to the cell wall substrate and/or regulating their activity by a possible change in the cell wall pH that results from loss of membrane potential. This is Holin-like protein CidA 1 (cidA1) from Bacillus cereus (strain ATCC 14579 / DSM 31 / CCUG 7414 / JCM 2152 / NBRC 15305 / NCIMB 9373 / NCTC 2599 / NRRL B-3711).